The chain runs to 302 residues: Probable 2-(5''-triphosphoribosyl)-3'-dephosphocoenzyme-A synthase (302 aa).

It belongs to the CitG/MdcB family.

The catalysed reaction is 3'-dephospho-CoA + ATP = 2'-(5''-triphospho-alpha-D-ribosyl)-3'-dephospho-CoA + adenine. This chain is Probable 2-(5''-triphosphoribosyl)-3'-dephosphocoenzyme-A synthase, found in Salmonella gallinarum (strain 287/91 / NCTC 13346).